The chain runs to 883 residues: NF-X1-type zinc finger protein NFXL2 (883 aa).

A compositionally biased stretch (polar residues) spans 1–10 (MTNMAGTATT). Residues 1–44 (MTNMAGTATTEFRWKSPPQPPSQEQPISDSDSDSGSDSENHQHR) form a disordered region. Residues 87–152 (CLICLERIKR…EAVWNCPKCR (66 aa)) form an RING-type; degenerate zinc finger. 11 consecutive NF-X1-type zinc fingers follow at residues 198–216 (CGHCCLLLCHPGPCASCPK), 250–269 (CNIHNCREICHDGECPPCRE), 303–322 (CGKHVCERGCHAGECGLCPY), 357–377 (CGYHRCPERCHRGPCLETCRI), 410–429 (CARHACRRRCCDGECPPCSE), 437–456 (CRNHKCQSPCHQGPCAPCPI), 494–515 (CRHGQNQKPHKCHYGACPPCRL), 523–568 (CGHK…RCPE), 605–636 (CGNHYCSYFCHALDIRSSSLDKRSESCEKCDL), 646–664 (CQHPCPRRCHPEDCPPCKT), and 709–738 (CTHLCPEICHPGQCPLPEKCGKKVVVRCKC). The tract at residues 798–824 (EIEEKEEPSGKNASKRRKRRGRGQDIQ) is disordered. A helical transmembrane segment spans residues 841–863 (MVVMLVAMLAAVSYYGYKGLLWL).

The protein belongs to the NFX1 family. As to quaternary structure, interacts with ADO1/ZTL. In terms of tissue distribution, constitutively expressed in mesophyll and guard cells.

Its subcellular location is the nucleus. The protein localises to the membrane. The protein operates within protein modification; protein ubiquitination. Its function is as follows. Probable transcriptional regulator. May mediate E2- or E3-dependent ubiquitination. Required to gate light sensitivity during the night. Regulates the speed of the clock by acting in the feedback loop between CCA1, LHY and APRR1/TOC1. Promotes the expression of CCA1 at night but not by days. This activational effect is enhanced by interaction with ADO1/ZTL. Association with ADO1/ZTL is not leading to the degradation of NFXL2. Confers sensitivity to osmotic stress such as high salinity. Prevents H(2)O(2) production and abscisic acid accumulation. Part of a regulatory network that integrates the biosynthesis and action of abscisic acid, reactive oxygen species and cuticle components. This is NF-X1-type zinc finger protein NFXL2 (NFXL2) from Arabidopsis thaliana (Mouse-ear cress).